A 254-amino-acid polypeptide reads, in one-letter code: 5'-nucleotidase SurE (254 aa).

Asp8, Asp9, Ser40, and Asn93 together coordinate a divalent metal cation.

This sequence belongs to the SurE nucleotidase family. A divalent metal cation is required as a cofactor.

Its subcellular location is the cytoplasm. It catalyses the reaction a ribonucleoside 5'-phosphate + H2O = a ribonucleoside + phosphate. Functionally, nucleotidase that shows phosphatase activity on nucleoside 5'-monophosphates. In Methylobacterium radiotolerans (strain ATCC 27329 / DSM 1819 / JCM 2831 / NBRC 15690 / NCIMB 10815 / 0-1), this protein is 5'-nucleotidase SurE.